Here is a 64-residue protein sequence, read N- to C-terminus: UPF0434 protein BOV_A0835 (64 aa).

It belongs to the UPF0434 family.

The sequence is that of UPF0434 protein BOV_A0835 from Brucella ovis (strain ATCC 25840 / 63/290 / NCTC 10512).